The primary structure comprises 414 residues: MTQANLSETLFKPRFKHPETSTLVRRFNHGAQPPVQSALDGKTIPHWYRMINRLMWIWRGIDPREILDVQARIVMSDAERTDDDLYDTVIGYRGGNWIYEWATQAMVWQQKACAEEDPQLSGRHWLHAATLYNIAAYPHLKGDDLAEQAQALSNRAYEEAAQRLPGTMRQMEFTVPGGAPITGFLHMPKGDGPFPTVLMCGGLDAMQTDYYSLYERYFAPRGIAMLTIDMPSVGFSSKWKLTQDSCLLHQRVLKALPNVPWVDHTRVAAFGFRFGANVAVRLAYLESPRLKAVACLGPVVHTLLSDFKCQQQVPEMYLDVLASRLGMHDASDEALRVELNRYSLKVQGLLGRRCPTPMLSGYWKNDPFSPEEDSRLITSSSADGKLLEIPFNPVYRNFDKGLQEITDWIEKRLC.

Belongs to the FrsA family.

The catalysed reaction is a carboxylic ester + H2O = an alcohol + a carboxylate + H(+). In terms of biological role, catalyzes the hydrolysis of esters. The protein is Esterase FrsA of Escherichia coli O157:H7.